Consider the following 249-residue polypeptide: ATP synthase subunit a (249 aa).

Transmembrane regions (helical) follow at residues 26-46 (FTNVSAFMVATVVLASGFLYL), 84-104 (FFPFVFSLFMFVLVANFIGLF), 114-134 (IIVTFALSLLVIGTVIFYGFF), 143-163 (LFVPSGVPGIIVPLVVLIEII), 185-205 (ITLKVFAGFVVSLSSLGALGI), and 208-228 (AVLPLLMTVAITALEFLVAFL).

This sequence belongs to the ATPase A chain family. F-type ATPases have 2 components, CF(1) - the catalytic core - and CF(0) - the membrane proton channel. CF(1) has five subunits: alpha(3), beta(3), gamma(1), delta(1), epsilon(1). CF(0) has three main subunits: a(1), b(2) and c(9-12). The alpha and beta chains form an alternating ring which encloses part of the gamma chain. CF(1) is attached to CF(0) by a central stalk formed by the gamma and epsilon chains, while a peripheral stalk is formed by the delta and b chains.

Its subcellular location is the cell inner membrane. Its function is as follows. Key component of the proton channel; it plays a direct role in the translocation of protons across the membrane. This chain is ATP synthase subunit a, found in Brucella canis (strain ATCC 23365 / NCTC 10854 / RM-666).